The sequence spans 270 residues: Glucosamine-6-phosphate deaminase (270 aa).

Asp-72 acts as the Proton acceptor; for enolization step in catalysis. Asp-141 (for ring-opening step) is an active-site residue. His-143 functions as the Proton acceptor; for ring-opening step in the catalytic mechanism. Residue Glu-148 is the For ring-opening step of the active site.

This sequence belongs to the glucosamine/galactosamine-6-phosphate isomerase family. NagB subfamily. Homohexamer.

It carries out the reaction alpha-D-glucosamine 6-phosphate + H2O = beta-D-fructose 6-phosphate + NH4(+). It participates in amino-sugar metabolism; N-acetylneuraminate degradation; D-fructose 6-phosphate from N-acetylneuraminate: step 5/5. With respect to regulation, allosterically activated by N-acetylglucosamine 6-phosphate (GlcNAc6P). Its function is as follows. Catalyzes the reversible isomerization-deamination of glucosamine 6-phosphate (GlcN6P) to form fructose 6-phosphate (Fru6P) and ammonium ion. The polypeptide is Glucosamine-6-phosphate deaminase (Haemophilus influenzae (strain PittEE)).